We begin with the raw amino-acid sequence, 1256 residues long: Muramidase-released protein (1256 aa).

The N-terminal stretch at 1–47 is a signal peptide; it reads MRRSNKKSFDWYGTKQQFSIRKYHFGAASVLLGVSLVLGAGAQVVKA. Small repeat units follow at residues 663–681 and 839–861; these read KTTGTVVAGTTTVKYVYEK and KTDGEENGKVIEGTITVTYVYQK. Disordered stretches follow at residues 873–949, 967–994, and 1028–1049; these read PETD…VDTP, GNPIAPQEEGTKPNKSIPGYEFTGKTVT, and KEPVTDTPTSPEGTPYDTTDNK. A Large repeat occupies 953-1006; it reads VPVKKVVTNHVDEEGNPIAPQEEGTKPNKSIPGYEFTGKTVTDEDGNTTHIYKK. The span at 1033–1045 shows a compositional bias: polar residues; sequence DTPTSPEGTPYDT. One copy of the Small repeat lies at 1064-1084; sequence RVDGTENGKVVEGETVVTYVY. Large repeat units lie at residues 1089-1142 and 1143-1195; these read TPAK…IYKK and TPAK…IYRK. The segment at 1102–1137 is disordered; that stretch reads EGNPVAPQEEGTKPNKSIPGYEFTGKTVTDEDGNTT. The tract at residues 1196–1229 is disordered; it reads LSNKPTTPEKETPAKPQAGKTASGKAQLPNTGEA. The LPXTG sorting signal motif lies at 1223-1227; sequence LPNTG. Residue Thr1226 is modified to Pentaglycyl murein peptidoglycan amidated threonine. Residues 1227-1256 constitute a propeptide, removed by sortase; that stretch reads GEASSVAGALGTAMLVATLAFARKRRRNED.

The protein resides in the secreted. Its subcellular location is the cell wall. In Streptococcus suis, this protein is Muramidase-released protein (mrp).